The chain runs to 270 residues: Shikimate dehydrogenase (NADP(+)) (270 aa).

Residues 15 to 17 (SLS) and Thr-62 each bind shikimate. The Proton acceptor role is filled by Lys-66. The shikimate site is built by Asn-87 and Asp-102. NADP(+) contacts are provided by residues 126–130 (GAGGS), 149–154 (NRTVGR), and Ile-210. Residue Tyr-212 coordinates shikimate. Residue Gly-233 participates in NADP(+) binding.

The protein belongs to the shikimate dehydrogenase family. As to quaternary structure, homodimer.

The enzyme catalyses shikimate + NADP(+) = 3-dehydroshikimate + NADPH + H(+). It functions in the pathway metabolic intermediate biosynthesis; chorismate biosynthesis; chorismate from D-erythrose 4-phosphate and phosphoenolpyruvate: step 4/7. Involved in the biosynthesis of the chorismate, which leads to the biosynthesis of aromatic amino acids. Catalyzes the reversible NADPH linked reduction of 3-dehydroshikimate (DHSA) to yield shikimate (SA). The chain is Shikimate dehydrogenase (NADP(+)) from Hyphomonas neptunium (strain ATCC 15444).